The following is a 290-amino-acid chain: Chitinase 10 (290 aa).

Positions 1–28 are cleaved as a signal peptide; the sequence is MAKPTPAPRATPFLLAAVLSIVVVAASG. 2 cysteine pairs are disulfide-bonded: Cys-70-Cys-132 and Cys-144-Cys-153. The active-site Proton donor is the Glu-114. N-linked (GlcNAc...) asparagine glycans are attached at residues Asn-193 and Asn-234. Cys-252 and Cys-284 are oxidised to a cystine.

Belongs to the glycosyl hydrolase 19 family. Chitinase class I subfamily. Expressed at low levels in roots, leaves and meristems.

The enzyme catalyses Random endo-hydrolysis of N-acetyl-beta-D-glucosaminide (1-&gt;4)-beta-linkages in chitin and chitodextrins.. This Oryza sativa subsp. japonica (Rice) protein is Chitinase 10 (Cht10).